Here is a 76-residue protein sequence, read N- to C-terminus: MAGTGIIAIAAAIAAFTGIGAGIGISLATGKAVEGIARQPEAAGSIRTSLLLGAALAEATAIYGLVVALVLVFLKM.

The next 2 membrane-spanning stretches (helical) occupy residues 5-25 (GIIA…GIGI) and 54-74 (AALA…LVFL).

The protein belongs to the ATPase C chain family. F-type ATPases have 2 components, F(1) - the catalytic core - and F(0) - the membrane proton channel. F(1) has five subunits: alpha(3), beta(3), gamma(1), delta(1), epsilon(1). F(0) has three main subunits: a(1), b(2) and c(10-14). The alpha and beta chains form an alternating ring which encloses part of the gamma chain. F(1) is attached to F(0) by a central stalk formed by the gamma and epsilon chains, while a peripheral stalk is formed by the delta and b chains.

It localises to the cell membrane. F(1)F(0) ATP synthase produces ATP from ADP in the presence of a proton or sodium gradient. F-type ATPases consist of two structural domains, F(1) containing the extramembraneous catalytic core and F(0) containing the membrane proton channel, linked together by a central stalk and a peripheral stalk. During catalysis, ATP synthesis in the catalytic domain of F(1) is coupled via a rotary mechanism of the central stalk subunits to proton translocation. In terms of biological role, key component of the F(0) channel; it plays a direct role in translocation across the membrane. A homomeric c-ring of between 10-14 subunits forms the central stalk rotor element with the F(1) delta and epsilon subunits. The chain is ATP synthase subunit c from Ruminiclostridium cellulolyticum (strain ATCC 35319 / DSM 5812 / JCM 6584 / H10) (Clostridium cellulolyticum).